Reading from the N-terminus, the 130-residue chain is uncharacterized protein (130 aa).

The next 3 helical transmembrane spans lie at 34-54 (AILI…FAFF), 73-93 (LLLT…GWLA), and 107-127 (FGTG…IVWI).

The protein resides in the cell membrane. This is an uncharacterized protein from Mycoplasma pneumoniae (strain ATCC 29342 / M129 / Subtype 1) (Mycoplasmoides pneumoniae).